Reading from the N-terminus, the 506-residue chain is Cobyric acid synthase (506 aa).

Residues 251–448 (DITIAIVQLP…LHGLFDSDAF (198 aa)) enclose the GATase cobBQ-type domain. The Nucleophile role is filled by Cys-332. His-440 is a catalytic residue.

It belongs to the CobB/CobQ family. CobQ subfamily.

It participates in cofactor biosynthesis; adenosylcobalamin biosynthesis. Catalyzes amidations at positions B, D, E, and G on adenosylcobyrinic A,C-diamide. NH(2) groups are provided by glutamine, and one molecule of ATP is hydrogenolyzed for each amidation. The polypeptide is Cobyric acid synthase (Salmonella dublin (strain CT_02021853)).